The sequence spans 363 residues: tRNA(Met) cytidine acetate ligase (363 aa).

ATP is bound by residues 7 to 20 (IAEFNPFHNGHKYL), Gly96, Asn152, and Arg175.

Belongs to the TmcAL family.

It localises to the cytoplasm. It catalyses the reaction cytidine(34) in elongator tRNA(Met) + acetate + ATP = N(4)-acetylcytidine(34) in elongator tRNA(Met) + AMP + diphosphate. Its function is as follows. Catalyzes the formation of N(4)-acetylcytidine (ac(4)C) at the wobble position of elongator tRNA(Met), using acetate and ATP as substrates. First activates an acetate ion to form acetyladenylate (Ac-AMP) and then transfers the acetyl group to tRNA to form ac(4)C34. This chain is tRNA(Met) cytidine acetate ligase, found in Streptococcus thermophilus (strain ATCC BAA-250 / LMG 18311).